Here is a 123-residue protein sequence, read N- to C-terminus: Fluoride-specific ion channel FluC 2 (123 aa).

Helical transmembrane passes span 30 to 50, 68 to 88, and 93 to 113; these read FPLP…FVAG, VGFI…VLLL, and WPLA…AVWV. Positions 72 and 75 each coordinate Na(+).

It belongs to the fluoride channel Fluc/FEX (TC 1.A.43) family.

It localises to the cell membrane. It carries out the reaction fluoride(in) = fluoride(out). Na(+) is not transported, but it plays an essential structural role and its presence is essential for fluoride channel function. In terms of biological role, fluoride-specific ion channel. Important for reducing fluoride concentration in the cell, thus reducing its toxicity. The chain is Fluoride-specific ion channel FluC 2 from Symbiobacterium thermophilum (strain DSM 24528 / JCM 14929 / IAM 14863 / T).